Reading from the N-terminus, the 184-residue chain is Photosystem I assembly protein Ycf4 (184 aa).

2 consecutive transmembrane segments (helical) span residues 22–42 and 57–77; these read FFWA…GTSS and ILFF…LFIS.

This sequence belongs to the Ycf4 family.

The protein localises to the plastid. It localises to the chloroplast thylakoid membrane. Functionally, seems to be required for the assembly of the photosystem I complex. This is Photosystem I assembly protein Ycf4 from Nandina domestica (Heavenly bamboo).